The chain runs to 207 residues: Thaumatin-like protein 1 (207 aa).

Cystine bridges form between Cys9/Cys202, Cys50/Cys60, Cys65/Cys71, Cys117/Cys191, Cys122/Cys174, Cys130/Cys140, Cys144/Cys153, and Cys154/Cys161.

This sequence belongs to the thaumatin family. In terms of assembly, monomer. In terms of processing, not glycosylated.

Its subcellular location is the secreted. Acidic thaumatin-like protein. Exhibits weak beta-1,3-glucanase activity with laminarin as substrate. The protein is Thaumatin-like protein 1 (TLP1) of Manilkara zapota (Sapodilla plum).